A 116-amino-acid polypeptide reads, in one-letter code: Large ribosomal subunit protein bL20 (116 aa).

This sequence belongs to the bacterial ribosomal protein bL20 family.

Its function is as follows. Binds directly to 23S ribosomal RNA and is necessary for the in vitro assembly process of the 50S ribosomal subunit. It is not involved in the protein synthesizing functions of that subunit. In Nautilia profundicola (strain ATCC BAA-1463 / DSM 18972 / AmH), this protein is Large ribosomal subunit protein bL20.